Reading from the N-terminus, the 347-residue chain is MNPLILLLITLTVILGTLIVMMSSHWLMIWMGFEMNMLAVIPLLMKQYNPRSMEAATKYFLTQATASMLLMLAIIINLMYSGQWTFTKFMDPTASIIMTLALMMKLGLAPFHFWVPEVTQGISLTSGLILLTWQKLAPLSILYTITPVINPDLLLMASMLSIAIGGWGGLNQTQLRKILAYSSIAHMGWMMSVLAFNPTMTLLNLFMYILMTSTTFMLFMVASTTTTLSLSLTWNKTPLITTSILIMMLSLGGLPPLAGFLPKWMIIQELTKSNNIILATLMAITALLNLFFYIRLTYATSLTMFPTTNNMKIKWQFKTTKQMNYLPPLIIMSTLTLPLAPAMILLN.

Transmembrane regions (helical) follow at residues 3–23 (PLIL…VMMS), 25–45 (HWLM…PLLM), 59–79 (YFLT…INLM), 96–116 (IIMT…FWVP), 122–142 (ISLT…LSIL), 148–168 (VINP…GGWG), 178–198 (ILAY…AFNP), 202–222 (LLNL…FMVA), 240–260 (ITTS…LAGF), 276–296 (IILA…YIRL), and 326–346 (LPPL…MILL).

The protein belongs to the complex I subunit 2 family. Core subunit of respiratory chain NADH dehydrogenase (Complex I) which is composed of 45 different subunits. Interacts with TMEM242.

It localises to the mitochondrion inner membrane. It catalyses the reaction a ubiquinone + NADH + 5 H(+)(in) = a ubiquinol + NAD(+) + 4 H(+)(out). Functionally, core subunit of the mitochondrial membrane respiratory chain NADH dehydrogenase (Complex I) which catalyzes electron transfer from NADH through the respiratory chain, using ubiquinone as an electron acceptor. Essential for the catalytic activity and assembly of complex I. This is NADH-ubiquinone oxidoreductase chain 2 from Peropteryx kappleri (Greater dog-like bat).